The primary structure comprises 101 residues: Small ribosomal subunit protein uS14 (101 aa).

The interval 1-26 (MAKVSSIQKNKSRQKKSQSLHNKRSE) is disordered. Positions 10 to 22 (NKSRQKKSQSLHN) are enriched in basic residues.

The protein belongs to the universal ribosomal protein uS14 family. Part of the 30S ribosomal subunit. Contacts proteins S3 and S10.

Functionally, binds 16S rRNA, required for the assembly of 30S particles and may also be responsible for determining the conformation of the 16S rRNA at the A site. This Rickettsia prowazekii (strain Madrid E) protein is Small ribosomal subunit protein uS14.